Here is a 35-residue protein sequence, read N- to C-terminus: Flavodoxin (35 aa).

In terms of domain architecture, Flavodoxin-like spans 4-35 (IGLFYGTZTGKTESVAEIIDEFGDEVVTLDID).

Belongs to the flavodoxin family. It depends on FMN as a cofactor.

Functionally, low-potential electron donor to a number of redox enzymes. This Nostoc sp. (strain MAC) protein is Flavodoxin.